Consider the following 394-residue polypeptide: Phosphoglycerate kinase (394 aa).

Residues 21–23, Arg37, 60–63, Arg119, and Arg152 contribute to the substrate site; these read DFN and HLGR. ATP-binding positions include Lys202, Glu324, and 350 to 353; that span reads GGDS.

The protein belongs to the phosphoglycerate kinase family. As to quaternary structure, monomer.

It is found in the cytoplasm. The enzyme catalyses (2R)-3-phosphoglycerate + ATP = (2R)-3-phospho-glyceroyl phosphate + ADP. The protein operates within carbohydrate degradation; glycolysis; pyruvate from D-glyceraldehyde 3-phosphate: step 2/5. The polypeptide is Phosphoglycerate kinase (Herpetosiphon aurantiacus (strain ATCC 23779 / DSM 785 / 114-95)).